The primary structure comprises 82 residues: ATP synthase subunit c, chloroplastic (82 aa).

Position 1 is an N-formylmethionine (methionine 1). A run of 2 helical transmembrane segments spans residues 3–23 (PIVAATSVVSAGLAVGLAAIG) and 57–77 (FAFMESLTIYGLVVALALLFA).

Belongs to the ATPase C chain family. As to quaternary structure, F-type ATPases have 2 components, F(1) - the catalytic core - and F(0) - the membrane proton channel. F(1) has five subunits: alpha(3), beta(3), gamma(1), delta(1), epsilon(1). F(0) has four main subunits: a(1), b(1), b'(1) and c(10-14). The alpha and beta chains form an alternating ring which encloses part of the gamma chain. F(1) is attached to F(0) by a central stalk formed by the gamma and epsilon chains, while a peripheral stalk is formed by the delta, b and b' chains.

It is found in the plastid. Its subcellular location is the chloroplast thylakoid membrane. Its function is as follows. F(1)F(0) ATP synthase produces ATP from ADP in the presence of a proton or sodium gradient. F-type ATPases consist of two structural domains, F(1) containing the extramembraneous catalytic core and F(0) containing the membrane proton channel, linked together by a central stalk and a peripheral stalk. During catalysis, ATP synthesis in the catalytic domain of F(1) is coupled via a rotary mechanism of the central stalk subunits to proton translocation. In terms of biological role, key component of the F(0) channel; it plays a direct role in translocation across the membrane. A homomeric c-ring of between 10-14 subunits forms the central stalk rotor element with the F(1) delta and epsilon subunits. In Chlamydomonas reinhardtii (Chlamydomonas smithii), this protein is ATP synthase subunit c, chloroplastic.